Here is a 121-residue protein sequence, read N- to C-terminus: SLLEFGMMILEETGKLAVPFYSSYGCYCGWGGKGTPKDATDRCCFVHDCCYGNLPDCTPKPDRYKYKRVNGAIVCEQGTSCENRICECDKAAAICFTKNLNTYSKIYMLYPDFLCKGELKC.

Intrachain disulfides connect C26-C115, C28-C44, C43-C95, C49-C121, C50-C88, C57-C81, and C75-C86. The Ca(2+) site is built by Y27, G29, and G31. The active site involves H47. D48 contributes to the Ca(2+) binding site. D89 is an active-site residue.

It belongs to the phospholipase A2 family. Group II subfamily. D49 sub-subfamily. Monomer. Ca(2+) is required as a cofactor. In terms of tissue distribution, expressed by the venom gland.

It localises to the secreted. It carries out the reaction a 1,2-diacyl-sn-glycero-3-phosphocholine + H2O = a 1-acyl-sn-glycero-3-phosphocholine + a fatty acid + H(+). Its function is as follows. Snake venom phospholipase A2 (PLA2) that has a low enzymatic activity. PLA2 catalyzes the calcium-dependent hydrolysis of the 2-acyl groups in 3-sn-phosphoglycerides. This is Basic phospholipase A2 VRV-PL-V from Daboia russelii (Russel's viper).